Consider the following 354-residue polypeptide: UDP-N-acetylglucosamine--N-acetylmuramyl-(pentapeptide) pyrophosphoryl-undecaprenol N-acetylglucosamine transferase (354 aa).

UDP-N-acetyl-alpha-D-glucosamine contacts are provided by residues 15–17, N127, R163, S191, I242, 261–266, and Q286; these read TGG and ALTVSE.

The protein belongs to the glycosyltransferase 28 family. MurG subfamily.

The protein localises to the cell inner membrane. It catalyses the reaction di-trans,octa-cis-undecaprenyl diphospho-N-acetyl-alpha-D-muramoyl-L-alanyl-D-glutamyl-meso-2,6-diaminopimeloyl-D-alanyl-D-alanine + UDP-N-acetyl-alpha-D-glucosamine = di-trans,octa-cis-undecaprenyl diphospho-[N-acetyl-alpha-D-glucosaminyl-(1-&gt;4)]-N-acetyl-alpha-D-muramoyl-L-alanyl-D-glutamyl-meso-2,6-diaminopimeloyl-D-alanyl-D-alanine + UDP + H(+). It participates in cell wall biogenesis; peptidoglycan biosynthesis. In terms of biological role, cell wall formation. Catalyzes the transfer of a GlcNAc subunit on undecaprenyl-pyrophosphoryl-MurNAc-pentapeptide (lipid intermediate I) to form undecaprenyl-pyrophosphoryl-MurNAc-(pentapeptide)GlcNAc (lipid intermediate II). The protein is UDP-N-acetylglucosamine--N-acetylmuramyl-(pentapeptide) pyrophosphoryl-undecaprenol N-acetylglucosamine transferase of Pasteurella multocida (strain Pm70).